Consider the following 202-residue polypeptide: uncharacterized protein (202 aa).

Residues 1 to 78 (MKLVGSYTSP…YIELMNVAPA (78 aa)) enclose the GST N-terminal domain. Glutathione contacts are provided by residues S9, V49, and 62–63 (DS). One can recognise a GST C-terminal domain in the interval 83–202 (DPLESLRVRK…SFARTEPPKA (120 aa)).

Belongs to the GST superfamily. HSP26 family.

Glutathione (GSH) transferase homolog, that might be involved in selenium metabolism. This is an uncharacterized protein from Escherichia coli (strain K12).